Here is a 251-residue protein sequence, read N- to C-terminus: Aspartate/glutamate leucyltransferase (251 aa).

This sequence belongs to the R-transferase family. Bpt subfamily.

It is found in the cytoplasm. The catalysed reaction is N-terminal L-glutamyl-[protein] + L-leucyl-tRNA(Leu) = N-terminal L-leucyl-L-glutamyl-[protein] + tRNA(Leu) + H(+). The enzyme catalyses N-terminal L-aspartyl-[protein] + L-leucyl-tRNA(Leu) = N-terminal L-leucyl-L-aspartyl-[protein] + tRNA(Leu) + H(+). Its function is as follows. Functions in the N-end rule pathway of protein degradation where it conjugates Leu from its aminoacyl-tRNA to the N-termini of proteins containing an N-terminal aspartate or glutamate. In Xanthomonas euvesicatoria pv. vesicatoria (strain 85-10) (Xanthomonas campestris pv. vesicatoria), this protein is Aspartate/glutamate leucyltransferase.